The sequence spans 118 residues: Small ribosomal subunit protein uS13 (118 aa).

The tract at residues 94-118 (GLPVRGQRTKTNARTRKGPRKPIKK) is disordered.

This sequence belongs to the universal ribosomal protein uS13 family. Part of the 30S ribosomal subunit. Forms a loose heterodimer with protein S19. Forms two bridges to the 50S subunit in the 70S ribosome.

Located at the top of the head of the 30S subunit, it contacts several helices of the 16S rRNA. In the 70S ribosome it contacts the 23S rRNA (bridge B1a) and protein L5 of the 50S subunit (bridge B1b), connecting the 2 subunits; these bridges are implicated in subunit movement. Contacts the tRNAs in the A and P-sites. The polypeptide is Small ribosomal subunit protein uS13 (Edwardsiella ictaluri (strain 93-146)).